The following is a 257-amino-acid chain: Phosphonates import ATP-binding protein PhnC (257 aa).

The 245-residue stretch at 2 to 246 (IEFRNVSKVY…KFAEIYGDVA (245 aa)) folds into the ABC transporter domain. 35–42 (GLSGAGKS) provides a ligand contact to ATP.

The protein belongs to the ABC transporter superfamily. Phosphonates importer (TC 3.A.1.9.1) family. As to quaternary structure, the complex is composed of two ATP-binding proteins (PhnC), two transmembrane proteins (PhnE) and a solute-binding protein (PhnD).

It is found in the cell membrane. The catalysed reaction is phosphonate(out) + ATP + H2O = phosphonate(in) + ADP + phosphate + H(+). Part of the ABC transporter complex PhnCDE involved in phosphonates import. Responsible for energy coupling to the transport system. This chain is Phosphonates import ATP-binding protein PhnC, found in Bacillus cereus (strain ATCC 10987 / NRS 248).